The sequence spans 273 residues: Formamidopyrimidine-DNA glycosylase (273 aa).

The Schiff-base intermediate with DNA role is filled by Pro-2. The active-site Proton donor is Glu-3. Catalysis depends on Lys-58, which acts as the Proton donor; for beta-elimination activity. Positions 92, 111, and 153 each coordinate DNA. The segment at Lys-238–Tyr-272 adopts an FPG-type zinc-finger fold. The active-site Proton donor; for delta-elimination activity is Arg-262.

The protein belongs to the FPG family. As to quaternary structure, monomer. It depends on Zn(2+) as a cofactor.

It catalyses the reaction Hydrolysis of DNA containing ring-opened 7-methylguanine residues, releasing 2,6-diamino-4-hydroxy-5-(N-methyl)formamidopyrimidine.. The catalysed reaction is 2'-deoxyribonucleotide-(2'-deoxyribose 5'-phosphate)-2'-deoxyribonucleotide-DNA = a 3'-end 2'-deoxyribonucleotide-(2,3-dehydro-2,3-deoxyribose 5'-phosphate)-DNA + a 5'-end 5'-phospho-2'-deoxyribonucleoside-DNA + H(+). Functionally, involved in base excision repair of DNA damaged by oxidation or by mutagenic agents. Acts as a DNA glycosylase that recognizes and removes damaged bases. Has a preference for oxidized purines, such as 7,8-dihydro-8-oxoguanine (8-oxoG). Has AP (apurinic/apyrimidinic) lyase activity and introduces nicks in the DNA strand. Cleaves the DNA backbone by beta-delta elimination to generate a single-strand break at the site of the removed base with both 3'- and 5'-phosphates. The protein is Formamidopyrimidine-DNA glycosylase of Rickettsia peacockii (strain Rustic).